We begin with the raw amino-acid sequence, 189 residues long: Putative biopolymer transport protein ExbB-like 1 (189 aa).

3 helical membrane passes run Phe-14–Phe-34, Leu-99–Val-119, and Leu-147–Leu-167.

Belongs to the ExbB/TolQ family.

Its subcellular location is the cell inner membrane. This is Putative biopolymer transport protein ExbB-like 1 from Helicobacter pylori (strain ATCC 700392 / 26695) (Campylobacter pylori).